A 443-amino-acid polypeptide reads, in one-letter code: Xaa-Pro dipeptidase (443 aa).

Mn(2+) contacts are provided by Asp-246, Asp-257, His-339, Glu-384, and Glu-423.

The protein belongs to the peptidase M24B family. Bacterial-type prolidase subfamily. Requires Mn(2+) as cofactor.

The enzyme catalyses Xaa-L-Pro dipeptide + H2O = an L-alpha-amino acid + L-proline. In terms of biological role, splits dipeptides with a prolyl residue in the C-terminal position. This is Xaa-Pro dipeptidase from Serratia proteamaculans (strain 568).